We begin with the raw amino-acid sequence, 190 residues long: Cell division protein SepF (190 aa).

It belongs to the SepF family. As to quaternary structure, homodimer. Interacts with FtsZ.

It is found in the cytoplasm. Functionally, cell division protein that is part of the divisome complex and is recruited early to the Z-ring. Probably stimulates Z-ring formation, perhaps through the cross-linking of FtsZ protofilaments. Its function overlaps with FtsA. This is Cell division protein SepF from Synechococcus sp. (strain WH7803).